The sequence spans 264 residues: S-adenosylmethionine decarboxylase proenzyme (264 aa).

Catalysis depends on Ser-114, which acts as the Schiff-base intermediate with substrate; via pyruvic acid. Residue Ser-114 is modified to Pyruvic acid (Ser); by autocatalysis. The active-site Proton acceptor; for processing activity is the His-119. Residue Cys-142 is the Proton donor; for catalytic activity of the active site.

It belongs to the prokaryotic AdoMetDC family. Type 2 subfamily. As to quaternary structure, heterooctamer of four alpha and four beta chains arranged as a tetramer of alpha/beta heterodimers. The cofactor is pyruvate. Is synthesized initially as an inactive proenzyme. Formation of the active enzyme involves a self-maturation process in which the active site pyruvoyl group is generated from an internal serine residue via an autocatalytic post-translational modification. Two non-identical subunits are generated from the proenzyme in this reaction, and the pyruvate is formed at the N-terminus of the alpha chain, which is derived from the carboxyl end of the proenzyme. The post-translation cleavage follows an unusual pathway, termed non-hydrolytic serinolysis, in which the side chain hydroxyl group of the serine supplies its oxygen atom to form the C-terminus of the beta chain, while the remainder of the serine residue undergoes an oxidative deamination to produce ammonia and the pyruvoyl group blocking the N-terminus of the alpha chain.

The enzyme catalyses S-adenosyl-L-methionine + H(+) = S-adenosyl 3-(methylsulfanyl)propylamine + CO2. It participates in amine and polyamine biosynthesis; S-adenosylmethioninamine biosynthesis; S-adenosylmethioninamine from S-adenosyl-L-methionine: step 1/1. Catalyzes the decarboxylation of S-adenosylmethionine to S-adenosylmethioninamine (dcAdoMet), the propylamine donor required for the synthesis of the polyamines spermine and spermidine from the diamine putrescine. The protein is S-adenosylmethionine decarboxylase proenzyme of Chromohalobacter salexigens (strain ATCC BAA-138 / DSM 3043 / CIP 106854 / NCIMB 13768 / 1H11).